The chain runs to 325 residues: tRNA N6-adenosine threonylcarbamoyltransferase (325 aa).

Positions 110 and 114 each coordinate Fe cation. Substrate is bound by residues M133 to G137, D165, G178, and N268. Position 296 (D296) interacts with Fe cation.

This sequence belongs to the KAE1 / TsaD family. Fe(2+) is required as a cofactor.

The protein localises to the cytoplasm. It catalyses the reaction L-threonylcarbamoyladenylate + adenosine(37) in tRNA = N(6)-L-threonylcarbamoyladenosine(37) in tRNA + AMP + H(+). Functionally, required for the formation of a threonylcarbamoyl group on adenosine at position 37 (t(6)A37) in tRNAs that read codons beginning with adenine. Is involved in the transfer of the threonylcarbamoyl moiety of threonylcarbamoyl-AMP (TC-AMP) to the N6 group of A37, together with TsaE and TsaB. TsaD likely plays a direct catalytic role in this reaction. This Thermosipho melanesiensis (strain DSM 12029 / CIP 104789 / BI429) protein is tRNA N6-adenosine threonylcarbamoyltransferase.